A 201-amino-acid chain; its full sequence is LIM domain-containing protein PLIM2b (201 aa).

LIM zinc-binding domains lie at 8-68 (DKCT…LFKE) and 103-163 (DKCA…LFME). The disordered stretch occupies residues 171–201 (KKKSESQEVLPEVVPEEQPAPPPPDENREDN). A compositionally biased stretch (low complexity) spans 177–187 (QEVLPEVVPEE).

As to quaternary structure, interacts with NEK3.

The polypeptide is LIM domain-containing protein PLIM2b (Oryza sativa subsp. japonica (Rice)).